The primary structure comprises 336 residues: Nicotinate-nucleotide--dimethylbenzimidazole phosphoribosyltransferase (336 aa).

The interval 20-41 is disordered; the sequence is GPDAAARAGAEERNGQLTKPPG. Residue glutamate 304 is the Proton acceptor of the active site.

The protein belongs to the CobT family.

It catalyses the reaction 5,6-dimethylbenzimidazole + nicotinate beta-D-ribonucleotide = alpha-ribazole 5'-phosphate + nicotinate + H(+). It participates in nucleoside biosynthesis; alpha-ribazole biosynthesis; alpha-ribazole from 5,6-dimethylbenzimidazole: step 1/2. Its function is as follows. Catalyzes the synthesis of alpha-ribazole-5'-phosphate from nicotinate mononucleotide (NAMN) and 5,6-dimethylbenzimidazole (DMB). In Ruegeria pomeroyi (strain ATCC 700808 / DSM 15171 / DSS-3) (Silicibacter pomeroyi), this protein is Nicotinate-nucleotide--dimethylbenzimidazole phosphoribosyltransferase.